Reading from the N-terminus, the 219-residue chain is Clathrin light chain (219 aa).

Residues 32–136 (AEITGGSASA…KKEELRQQSK (105 aa)) are disordered. An involved in binding clathrin heavy chain region spans residues 96–158 (PPPSREEPEK…SISKTKLASR (63 aa)). Positions 99 to 136 (SREEPEKIRKWREEQKQRLEEKDIEEERKKEELRQQSK) are enriched in basic and acidic residues.

It belongs to the clathrin light chain family. In terms of assembly, clathrin coats are formed from molecules containing 3 heavy chains and 3 light chains.

It localises to the cytoplasmic vesicle membrane. The protein localises to the membrane. Its subcellular location is the coated pit. In terms of biological role, clathrin is the major protein of the polyhedral coat of coated pits and vesicles. The polypeptide is Clathrin light chain (Clc) (Drosophila melanogaster (Fruit fly)).